Consider the following 223-residue polypeptide: Putative protein phosphatase 2C 63 (223 aa).

A disordered region spans residues 1–22; it reads MASSQQAVRETGRGRASSSSAG. The region spanning 1–212 is the PPM-type phosphatase domain; sequence MASSQQAVRE…RNFHVHSSHV (212 aa).

This sequence belongs to the PP2C family.

It catalyses the reaction O-phospho-L-seryl-[protein] + H2O = L-seryl-[protein] + phosphate. The catalysed reaction is O-phospho-L-threonyl-[protein] + H2O = L-threonyl-[protein] + phosphate. This Oryza sativa subsp. japonica (Rice) protein is Putative protein phosphatase 2C 63.